The chain runs to 84 residues: DNA-directed RNA polymerase subunit Rpo5 (84 aa).

It belongs to the archaeal Rpo5/eukaryotic RPB5 RNA polymerase subunit family. Part of the 13-subunit RNA polymerase.

It localises to the cytoplasm. It carries out the reaction RNA(n) + a ribonucleoside 5'-triphosphate = RNA(n+1) + diphosphate. DNA-dependent RNA polymerase (RNAP) catalyzes the transcription of DNA into RNA using the four ribonucleoside triphosphates as substrates. Functionally, reconstitution experiments show this subunit is required for basic activity. This Sulfolobus acidocaldarius (strain ATCC 33909 / DSM 639 / JCM 8929 / NBRC 15157 / NCIMB 11770) protein is DNA-directed RNA polymerase subunit Rpo5.